A 424-amino-acid chain; its full sequence is Deoxyguanosinetriphosphate triphosphohydrolase-like protein (424 aa).

Pro residues predominate over residues 1–10 (MEGTAPPTPY). Residues 1–31 (MEGTAPPTPYDPASVARYAPEPDKRPGRTAF) form a disordered region. Over residues 20 to 31 (PEPDKRPGRTAF) the composition is skewed to basic and acidic residues. Residues 70–220 (RLTHSLECAQ…MDWADDVAYS (151 aa)) enclose the HD domain.

This sequence belongs to the dGTPase family. Type 2 subfamily.

The protein is Deoxyguanosinetriphosphate triphosphohydrolase-like protein of Streptomyces coelicolor (strain ATCC BAA-471 / A3(2) / M145).